A 253-amino-acid chain; its full sequence is Proteasome subunit alpha (253 aa).

Residues 229 to 253 (ADESQSYIDDIEDAADDSDDDDDEE) are disordered. Residues 237–253 (DDIEDAADDSDDDDDEE) are compositionally biased toward acidic residues.

It belongs to the peptidase T1A family. The 20S proteasome core is composed of 14 alpha and 14 beta subunits that assemble into four stacked heptameric rings, resulting in a barrel-shaped structure. The two inner rings, each composed of seven catalytic beta subunits, are sandwiched by two outer rings, each composed of seven alpha subunits. The catalytic chamber with the active sites is on the inside of the barrel. Has a gated structure, the ends of the cylinder being occluded by the N-termini of the alpha-subunits. Is capped at one or both ends by the proteasome regulatory ATPase, PAN.

The protein resides in the cytoplasm. With respect to regulation, the formation of the proteasomal ATPase PAN-20S proteasome complex, via the docking of the C-termini of PAN into the intersubunit pockets in the alpha-rings, triggers opening of the gate for substrate entry. Interconversion between the open-gate and close-gate conformations leads to a dynamic regulation of the 20S proteasome proteolysis activity. Functionally, component of the proteasome core, a large protease complex with broad specificity involved in protein degradation. The protein is Proteasome subunit alpha of Halobacterium salinarum (strain ATCC 29341 / DSM 671 / R1).